Consider the following 366-residue polypeptide: Ferrochelatase (366 aa).

His209 and Glu290 together coordinate Fe cation.

The protein belongs to the ferrochelatase family.

Its subcellular location is the cytoplasm. It carries out the reaction heme b + 2 H(+) = protoporphyrin IX + Fe(2+). It functions in the pathway porphyrin-containing compound metabolism; protoheme biosynthesis; protoheme from protoporphyrin-IX: step 1/1. Functionally, catalyzes the ferrous insertion into protoporphyrin IX. This is Ferrochelatase from Teredinibacter turnerae (strain ATCC 39867 / T7901).